A 223-amino-acid chain; its full sequence is uncharacterized protein (223 aa).

The disordered stretch occupies residues 117–148 (THAHTHAHTHGHTHTRAHSTHAHTHAHSHYHT).

This is an uncharacterized protein from Homo sapiens (Human).